A 151-amino-acid polypeptide reads, in one-letter code: UPF0208 membrane protein YE1335 (151 aa).

A run of 2 helical transmembrane segments spans residues 46–66 (FGIR…IALG) and 69–89 (LGPA…GLWW).

It belongs to the UPF0208 family.

The protein resides in the cell inner membrane. This is UPF0208 membrane protein YE1335 from Yersinia enterocolitica serotype O:8 / biotype 1B (strain NCTC 13174 / 8081).